Consider the following 376-residue polypeptide: Secreted LysM effector LysM9 (376 aa).

Residues 1–25 form the signal peptide; it reads MGHFHLSNFIALIGILLVGPTATSG. Residues 41-89 form the LysM domain; that stretch reads SKYVVQAGETCSAIAQAHSITTADIETYNAQSWAWTGCGQISQGDFICL. Positions 190–219 are disordered; the sequence is SSETSSSMTTSTSATTSVPTTTSTTTTTKT.

Belongs to the secreted LysM effector family.

Its subcellular location is the secreted. Functionally, secreted LysM effector that might have a role in sequestration of chitin oligosaccharides (breakdown products of fungal cell walls that are released during invasion and act as triggers of host immunity) to dampen host defense. This Penicillium expansum (Blue mold rot fungus) protein is Secreted LysM effector LysM9.